We begin with the raw amino-acid sequence, 499 residues long: Argininosuccinate lyase (499 aa).

The segment at 1 to 22 (MSDGEDHETANADDRDETVVRR) is disordered. Basic and acidic residues predominate over residues 7–22 (HETANADDRDETVVRR).

The protein belongs to the lyase 1 family. Argininosuccinate lyase subfamily.

It is found in the cytoplasm. The catalysed reaction is 2-(N(omega)-L-arginino)succinate = fumarate + L-arginine. The protein operates within amino-acid biosynthesis; L-arginine biosynthesis; L-arginine from L-ornithine and carbamoyl phosphate: step 3/3. The polypeptide is Argininosuccinate lyase (Haloarcula marismortui (strain ATCC 43049 / DSM 3752 / JCM 8966 / VKM B-1809) (Halobacterium marismortui)).